Here is a 428-residue protein sequence, read N- to C-terminus: Sialidase-3 (428 aa).

The FRIP motif motif lies at 24-27 (YRIP). Substrate contacts are provided by Arg25 and Arg45. Asp50 acts as the Proton acceptor in catalysis. One copy of the BNR 1 repeat lies at 129–140 (IYSQDAGCSWSE). 2 residues coordinate substrate: Tyr179 and Tyr181. The stretch at 203 to 214 (IYSDDLGVTWHH) is one BNR 2 repeat. Positions 225 and 245 each coordinate substrate. Residues 254–265 (ALSTDHGEGFQR) form a BNR 3 repeat. Residues 294-318 (RCQDSSSKDAPTIQQSSPGSSLRLE) are disordered. Over residues 301–313 (KDAPTIQQSSPGS) the composition is skewed to polar residues. Position 313 is a phosphoserine (Ser313). Residue Arg340 coordinates substrate. Tyr370 serves as the catalytic Nucleophile. Glu387 is an active-site residue.

It belongs to the glycosyl hydrolase 33 family. As to quaternary structure, interacts with CAV1; this interaction enhances NEU3 sialidase activity within caveola. Interacts with EGFR; this interaction mediates desialylation of EGFR and enhances downstream signaling. In terms of processing, palmitoylated; may regulate intracellular trafficking and anchorage to plasma membrane and endomembranes. As to expression, highly expressed in skeletal muscle, testis, adrenal gland and thymus, followed by pancreas, liver, heart and thymus. Weakly expressed in kidney, placenta, brain and lung.

It localises to the cell membrane. Its subcellular location is the membrane. It is found in the caveola. The protein resides in the early endosome membrane. The protein localises to the recycling endosome membrane. It localises to the lysosome membrane. The enzyme catalyses Hydrolysis of alpha-(2-&gt;3)-, alpha-(2-&gt;6)-, alpha-(2-&gt;8)- glycosidic linkages of terminal sialic acid residues in oligosaccharides, glycoproteins, glycolipids, colominic acid and synthetic substrates.. It catalyses the reaction a ganglioside GD1a + H2O = a ganglioside GM1 + N-acetylneuraminate. It carries out the reaction a ganglioside GD1a (d18:1(4E)) + H2O = a ganglioside GM1 (d18:1(4E)) + N-acetylneuraminate. The catalysed reaction is a ganglioside GD1b + H2O = a ganglioside GM1 + N-acetylneuraminate. The enzyme catalyses a ganglioside GD1b (d18:1(4E)) + H2O = a ganglioside GM1 (d18:1(4E)) + N-acetylneuraminate. It catalyses the reaction a ganglioside GD3 + H2O = a ganglioside GM3 + N-acetylneuraminate. It carries out the reaction a ganglioside GD3 (d18:1(4E)) + H2O = a ganglioside GM3 (d18:1(4E)) + N-acetylneuraminate. The catalysed reaction is a ganglioside GM3 + H2O = a beta-D-galactosyl-(1-&gt;4)-beta-D-glucosyl-(1&lt;-&gt;1)-ceramide + N-acetylneuraminate. The enzyme catalyses a ganglioside GM1 + H2O = a ganglioside GA1 + N-acetylneuraminate. It catalyses the reaction a ganglioside GM1 (d18:1(4E)) + H2O = a ganglioside GA1 (d18:1(4E)) + N-acetylneuraminate. It carries out the reaction a ganglioside GM2 (d18:1(4E)) + H2O = a ganglioside GA2 (d18:1(4E)) + N-acetylneuraminate. The catalysed reaction is a ganglioside GM3 (d18:1(4E)) + H2O = a beta-D-Gal-(1-&gt;4)-beta-D-Glc-(1&lt;-&gt;1)-Cer(d18:1(4E)) + N-acetylneuraminate. The enzyme catalyses a ganglioside GT1b + H2O = a ganglioside GD1b + N-acetylneuraminate. In terms of biological role, exo-alpha-sialidase that catalyzes the hydrolytic cleavage of the terminal sialic acid (N-acetylneuraminic acid, Neu5Ac) of a glycan moiety in the catabolism of glycolipids, glycoproteins and oligosacharides. Displays high catalytic efficiency for gangliosides including alpha-(2-&gt;3)-sialylated GD1a and GM3 and alpha-(2-&gt;8)-sialylated GD3. Plays a role in the regulation of transmembrane signaling through the modulation of ganglioside content of the lipid bilayer and by direct interaction with signaling receptors, such as EGFR. Desialylates EGFR and activates downstream signaling in proliferating cells. Contributes to clathrin-mediated endocytosis by regulating sorting of endocytosed receptors to early and recycling endosomes. The protein is Sialidase-3 (NEU3) of Homo sapiens (Human).